Consider the following 62-residue polypeptide: Large ribosomal subunit protein bL28 (62 aa).

It belongs to the bacterial ribosomal protein bL28 family.

In Helicobacter pylori (strain Shi470), this protein is Large ribosomal subunit protein bL28.